Here is a 243-residue protein sequence, read N- to C-terminus: Transcription factor A, mitochondrial (243 aa).

A mitochondrion-targeting transit peptide spans M1–F42. The HMG box 1 DNA-binding region spans P49 to K117. S54, S55, and S60 each carry phosphoserine; by PKA. K66 carries the post-translational modification N6-succinyllysine. At T121 the chain carries Phosphothreonine. The HMG box 2 DNA-binding region spans P154–E218. Phosphoserine; by PKA is present on S159. A Phosphoserine modification is found at S192.

Monomer; binds DNA as a monomer. Homodimer. Component of the mitochondrial transcription initiation complex, composed at least of TFB2M, TFAM and POLRMT. In this complex TFAM recruits POLRMT to the promoter whereas TFB2M induces structural changes in POLRMT to enable promoter opening and trapping of the DNA non-template strand. Upon metabolic stress, forms a complex composed of FOXO3, SIRT3, TFAM and POLRMT. Interacts with TFB1M and TFB2M. Interacts with CLPX; this enhances DNA-binding. Post-translationally, phosphorylation by PKA within the HMG box 1 impairs DNA binding and promotes degradation by the AAA+ Lon protease. The mitochondrial isoform is widely expressed while the nuclear isoform is testis-specific.

Its subcellular location is the mitochondrion. It is found in the mitochondrion matrix. The protein localises to the mitochondrion nucleoid. It localises to the nucleus. Binds to the mitochondrial light strand promoter and functions in mitochondrial transcription regulation. Component of the mitochondrial transcription initiation complex, composed at least of TFB2M, TFAM and POLRMT that is required for basal transcription of mitochondrial DNA. In this complex, TFAM recruits POLRMT to a specific promoter whereas TFB2M induces structural changes in POLRMT to enable promoter opening and trapping of the DNA non-template strand. Required for accurate and efficient promoter recognition by the mitochondrial RNA polymerase. Promotes transcription initiation from the HSP1 and the light strand promoter by binding immediately upstream of transcriptional start sites. Is able to unwind DNA. Bends the mitochondrial light strand promoter DNA into a U-turn shape via its HMG boxes. Required for maintenance of normal levels of mitochondrial DNA. May play a role in organizing and compacting mitochondrial DNA. Its function is as follows. May also function as a transcriptional activator or may have a structural role in the compaction of nuclear DNA during spermatogenesis. The chain is Transcription factor A, mitochondrial from Mus musculus (Mouse).